The following is a 332-amino-acid chain: tRNA dimethylallyltransferase (332 aa).

14 to 21 (GPTASGKT) lines the ATP pocket. 16-21 (TASGKT) serves as a coordination point for substrate. Residues 39-42 (DSMQ) are interaction with substrate tRNA. The disordered stretch occupies residues 313 to 332 (KRSSKHDCKPQHPRSSTREL). Over residues 317 to 332 (KHDCKPQHPRSSTREL) the composition is skewed to basic and acidic residues.

This sequence belongs to the IPP transferase family. Monomer. Requires Mg(2+) as cofactor.

The enzyme catalyses adenosine(37) in tRNA + dimethylallyl diphosphate = N(6)-dimethylallyladenosine(37) in tRNA + diphosphate. Catalyzes the transfer of a dimethylallyl group onto the adenine at position 37 in tRNAs that read codons beginning with uridine, leading to the formation of N6-(dimethylallyl)adenosine (i(6)A). The sequence is that of tRNA dimethylallyltransferase from Staphylococcus haemolyticus (strain JCSC1435).